Consider the following 87-residue polypeptide: Small ribosomal subunit protein uS17 (87 aa).

It belongs to the universal ribosomal protein uS17 family. Part of the 30S ribosomal subunit.

One of the primary rRNA binding proteins, it binds specifically to the 5'-end of 16S ribosomal RNA. The sequence is that of Small ribosomal subunit protein uS17 from Alkalilimnicola ehrlichii (strain ATCC BAA-1101 / DSM 17681 / MLHE-1).